A 122-amino-acid polypeptide reads, in one-letter code: Large ribosomal subunit protein uL18 (122 aa).

This sequence belongs to the universal ribosomal protein uL18 family. Part of the 50S ribosomal subunit; part of the 5S rRNA/L5/L18/L25 subcomplex. Contacts the 5S and 23S rRNAs.

This is one of the proteins that bind and probably mediate the attachment of the 5S RNA into the large ribosomal subunit, where it forms part of the central protuberance. In Thermosipho melanesiensis (strain DSM 12029 / CIP 104789 / BI429), this protein is Large ribosomal subunit protein uL18.